A 585-amino-acid polypeptide reads, in one-letter code: Mitochondrial sodium/calcium exchanger protein (585 aa).

Positions 1–26 (MAGRWLDPLWAPGFLCVALILETASG) are cleaved as a signal peptide. Residues 27–95 (AGDLSTKAHG…GIFCYFPPNL (69 aa)) are Extracellular-facing. A glycan (N-linked (GlcNAc...) asparagine) is linked at N46. The chain crosses the membrane as a helical span at residues 96–116 (LPLAITLYVFWLLYLFLILGV). Residues 117–140 (TAAKFFCPNLSAISTSLKLSHNVA) lie on the Cytoplasmic side of the membrane. The helical transmembrane segment at 141–161 (GVTFLAFGNGAPDIFSALVAF) threads the bilayer. Topologically, residues 162 to 168 (SDPRTAG) are extracellular. Residues 169–189 (LAIGALFGAGVLVTTVVAGGI) form a helical membrane-spanning segment. Topologically, residues 190-205 (TILRPFMAASRPFLRD) are cytoplasmic. The helical transmembrane segment at 206-226 (ITFYMVAVFLTFTALYLGRIT) threads the bilayer. Residue L227 is a topological domain, extracellular. Residues 228–247 (VWALGYLGLYVFYVVTVIIC) traverse the membrane as a helical segment. The Cytoplasmic portion of the chain corresponds to 248 to 325 (TWVYQRQRSR…KWRTQSISCK (78 aa)). S258 carries the post-translational modification Phosphoserine; by PKA. Residues 326 to 346 (LLKVAKLPVEFLLLLTVPVVD) traverse the membrane as a helical segment. Topologically, residues 347 to 360 (PDKDDRNWKRPLNC) are extracellular. A helical transmembrane segment spans residues 361-381 (LQLVISPLVLVLTLQSGVYGI). Topologically, residues 382–383 (YE) are cytoplasmic. A helical transmembrane segment spans residues 384-404 (IGGLLPVWAVVVIVGTALASV). Topologically, residues 405–416 (TFFATSNSEPPR) are extracellular. The helical transmembrane segment at 417-437 (LHWLFAFLGFLTSALWINAAA) threads the bilayer. Residues 438–445 (TEVVNILR) are Cytoplasmic-facing. Residues 446–466 (SLGVVFRLSNTVLGLTLLAWG) form a helical membrane-spanning segment. At 467-491 (NSIGDAFSDFTLARQGYPRMAFSAC) the chain is on the extracellular side. Residues 492-512 (FGGIIFNILVGVGLGCLLQIV) traverse the membrane as a helical segment. Residues 513–525 (RSHASEVKLEPDG) are Cytoplasmic-facing. Residues 526–546 (LLVWVLASALGLSLVFSLVSV) traverse the membrane as a helical segment. The Extracellular portion of the chain corresponds to 547 to 559 (PLQCFQLSKAYGL). The chain crosses the membrane as a helical span at residues 560 to 580 (CLLLFYICFIVVVLLTEFGVI). Residues 581–585 (HLKAD) are Cytoplasmic-facing.

Belongs to the Ca(2+):cation antiporter (CaCA) (TC 2.A.19) family. SLC24A subfamily. Phosphorylation at Ser-258 by PKA prevents calcium overload. In terms of tissue distribution, widely expressed. Present at higher level in pancreas, stomach, skeletal muscle and skin (at protein level). Ubiquitously expressed.

The protein localises to the mitochondrion inner membrane. The catalysed reaction is Ca(2+)(in) + 3 Na(+)(out) = Ca(2+)(out) + 3 Na(+)(in). It catalyses the reaction 3 Li(+)(out) + Ca(2+)(in) = 3 Li(+)(in) + Ca(2+)(out). With respect to regulation, inhibited by the sodium/calcium exchanger inhibitor CGP-37157. Strongly inhibited by zinc. Functionally, mitochondrial sodium/calcium antiporter that mediates sodium-dependent calcium efflux from mitochondrion, by mediating the exchange of 3 sodium ions per 1 calcium ion. Plays a central role in mitochondrial calcium homeostasis by mediating mitochondrial calcium extrusion: calcium efflux is essential for mitochondrial function and cell survival, notably in cardiomyocytes. Regulates rates of glucose-dependent insulin secretion in pancreatic beta-cells during the first phase of insulin secretion: acts by mediating efflux of calcium from mitochondrion, thereby affecting cytoplasmic calcium responses. Required for store-operated Ca(2+) entry (SOCE) and Ca(2+) release-activated Ca(2+) (CRAC) channel regulation: sodium transport by SLC8B1 leads to promote calcium-shuttling that modulates mitochondrial redox status, thereby regulating SOCE activity. Involved in B-lymphocyte chemotaxis. Able to transport Ca(2+) in exchange of either Li(+) or Na(+), explaining how Li(+) catalyzes Ca(2+) exchange. In contrast to other members of the family its function is independent of K(+). The sequence is that of Mitochondrial sodium/calcium exchanger protein from Rattus norvegicus (Rat).